Here is a 322-residue protein sequence, read N- to C-terminus: ATP-dependent 6-phosphofructokinase (322 aa).

G11 provides a ligand contact to ATP. 21 to 25 (RAVVR) lines the ADP pocket. ATP-binding positions include 72–73 (RC) and 102–105 (GDGS). Residue D103 coordinates Mg(2+). 127–129 (TID) lines the substrate pocket. D129 functions as the Proton acceptor in the catalytic mechanism. R156 is a binding site for ADP. Residues R164 and 171–173 (MGR) each bind substrate. Residues 187-189 (GAE), R213, and 215-217 (KKH) contribute to the ADP site. Residues E224, R245, and 251–254 (HIQR) contribute to the substrate site.

It belongs to the phosphofructokinase type A (PFKA) family. ATP-dependent PFK group I subfamily. Prokaryotic clade 'B1' sub-subfamily. Homotetramer. Mg(2+) is required as a cofactor.

The protein resides in the cytoplasm. The enzyme catalyses beta-D-fructose 6-phosphate + ATP = beta-D-fructose 1,6-bisphosphate + ADP + H(+). It functions in the pathway carbohydrate degradation; glycolysis; D-glyceraldehyde 3-phosphate and glycerone phosphate from D-glucose: step 3/4. Allosterically activated by ADP and other diphosphonucleosides, and allosterically inhibited by phosphoenolpyruvate. In terms of biological role, catalyzes the phosphorylation of D-fructose 6-phosphate to fructose 1,6-bisphosphate by ATP, the first committing step of glycolysis. In Staphylococcus carnosus (strain TM300), this protein is ATP-dependent 6-phosphofructokinase.